The primary structure comprises 768 residues: Cullin-3-B (768 aa).

The segment at 677–698 (VAAKQGESDPERKETRQKVDDD) is disordered. Basic and acidic residues predominate over residues 682–698 (GESDPERKETRQKVDDD). Residues 698-760 (DRKHEIEAAI…REYLARTPED (63 aa)) enclose the Cullin neddylation domain. A Glycyl lysine isopeptide (Lys-Gly) (interchain with G-Cter in NEDD8) cross-link involves residue lysine 712.

This sequence belongs to the cullin family. In terms of assembly, component of multiple BCR (BTB-CUL3-RBX1) E3 ubiquitin-protein ligase complexes formed of cul3, rbx1 and a variable BTB domain-containing protein acting as both, adapter to cullin and substrate recognition subunit. Interacts with btbd6. In terms of processing, neddylated. Attachment of NEDD8 is required for the E3 ubiquitin-protein ligase activity of the SCF-like complex.

The protein resides in the nucleus. Its pathway is protein modification; protein ubiquitination. Its function is as follows. Probable core component of cullin-based SCF-like E3 ubiquitin-protein ligase complexes which mediate the ubiquitination and subsequent proteasomal degradation of target proteins. The E3 ubiquitin-protein ligase activity of the complex is dependent on the neddylation of the cullin subunit. Involved in ER-Golgi transport by regulating the size of COPII coats, thereby playing a key role in collagen export, which is required for embryonic stem (ES) cells division. May play a role in the regulation of mittotic entry via ubiquitination of aurka. The chain is Cullin-3-B (cul3b) from Xenopus laevis (African clawed frog).